An 842-amino-acid chain; its full sequence is Putative G-type lectin S-receptor-like serine/threonine-protein kinase At1g61610 (842 aa).

The first 22 residues, 1–22 (MAGFNRNLTLVTTLLIFHQLCS), serve as a signal peptide directing secretion. N7, N23, N35, N60, N110, N123, N304, N351, and N380 each carry an N-linked (GlcNAc...) asparagine glycan. Residues 23-443 (NVSCSTSNSF…KLGGGKENST (421 aa)) are Extracellular-facing. One can recognise a Bulb-type lectin domain in the interval 29 to 150 (SNSFTRNHTI…SDRRKWYWES (122 aa)). The region spanning 292–331 (PSTECEKYNRCGNYSVCDDSKEFDSGKCSCIDGFEPVHQD) is the EGF-like domain. 2 disulfides stabilise this stretch: C296–C308 and C302–C319. A PAN domain is found at 350–431 (CNQSLVAGQE…GGNSINIRLA (82 aa)). Disulfide bonds link C385/C406 and C389/C395. N441 carries an N-linked (GlcNAc...) asparagine glycan. Residues 444–464 (LWIIVFSVIGAFLLGLCIWIL) traverse the membrane as a helical segment. The Cytoplasmic segment spans residues 465 to 842 (WKFKKSLKAF…DVTFTTIVGR (378 aa)). Residues 525-814 (FAEENKLGQG…PRQPTFHSFL (290 aa)) enclose the Protein kinase domain. Residues 531-539 (LGQGGFGTV) and K553 contribute to the ATP site. Position 559 is a phosphoserine (S559). The tract at residues 614–631 (SKQGSLDWRKRWEVIGGI) is caM-binding. Catalysis depends on D650, which acts as the Proton acceptor. Phosphoserine is present on residues S654 and S667. T684 carries the post-translational modification Phosphothreonine. A phosphoserine mark is found at S728 and S830. Residue T837 is modified to Phosphothreonine.

The protein belongs to the protein kinase superfamily. Ser/Thr protein kinase family.

The protein resides in the cell membrane. The enzyme catalyses L-seryl-[protein] + ATP = O-phospho-L-seryl-[protein] + ADP + H(+). The catalysed reaction is L-threonyl-[protein] + ATP = O-phospho-L-threonyl-[protein] + ADP + H(+). The sequence is that of Putative G-type lectin S-receptor-like serine/threonine-protein kinase At1g61610 from Arabidopsis thaliana (Mouse-ear cress).